Consider the following 212-residue polypeptide: Ras-related protein Rab-21 (212 aa).

Residues 14–21 (GEGCVGKT), 62–66 (DTAGQ), and 120–123 (NKCD) each bind GTP. Residues 181-212 (TNTTGQTTNRSERIPIVPDSDSGNKQPGCCSN) are disordered. Residues 201 to 212 (DSGNKQPGCCSN) are compositionally biased toward polar residues. S-geranylgeranyl cysteine attachment occurs at residues C209 and C210.

It belongs to the small GTPase superfamily. Rab family. As to quaternary structure, interacts with LIM domain proteins limF and ChLim.

The protein resides in the cell membrane. Functionally, involved in the regulation of phagocytosis. The protein is Ras-related protein Rab-21 (rab21) of Dictyostelium discoideum (Social amoeba).